The primary structure comprises 102 residues: Small ribosomal subunit protein uS10 (102 aa).

Belongs to the universal ribosomal protein uS10 family. In terms of assembly, part of the 30S ribosomal subunit.

Functionally, involved in the binding of tRNA to the ribosomes. The sequence is that of Small ribosomal subunit protein uS10 from Mycoplasma mycoides subsp. mycoides SC (strain CCUG 32753 / NCTC 10114 / PG1).